A 155-amino-acid polypeptide reads, in one-letter code: Ribosome maturation factor RimP (155 aa).

Belongs to the RimP family.

The protein localises to the cytoplasm. In terms of biological role, required for maturation of 30S ribosomal subunits. This chain is Ribosome maturation factor RimP, found in Deinococcus geothermalis (strain DSM 11300 / CIP 105573 / AG-3a).